The primary structure comprises 2381 residues: Highly reducing polyketide synthase virA (2381 aa).

The Ketosynthase family 3 (KS3) domain maps to 1–420; that stretch reads MDALHLACHL…GANGHVILES (420 aa). Residues Cys171, His306, and His344 each act as for beta-ketoacyl synthase activity in the active site. The interval 535–851 is malonyl-CoA:ACP transacylase (MAT) domain; the sequence is VFTGQGAQYA…PYSPTLVRKE (317 aa). Ser629 serves as the catalytic For malonyltransferase activity. The tract at residues 920–1064 is N-terminal hotdog fold; it reads HELLGTRATA…GSIRVMESTL (145 aa). The tract at residues 920–1232 is dehydratase (DH) domain; sequence HELLGTRATA…HLRMNEYTGK (313 aa). Residues 920–1235 form the PKS/mFAS DH domain; that stretch reads HELLGTRATA…MNEYTGKAPV (316 aa). The Proton acceptor; for dehydratase activity role is filled by His952. The segment at 1078–1235 is C-terminal hotdog fold; sequence HEVWGMSRWY…MNEYTGKAPV (158 aa). The active-site Proton donor; for dehydratase activity is Asp1144. The enoyl reductase (ER) domain stretch occupies residues 1639 to 1956; sequence GMTDTIHFQQ…NKDRVGKVVV (318 aa). The ketoreductase (KR) domain stretch occupies residues 1981 to 2159; it reads TYLLVGCLGG…AVSVGLGMIS (179 aa). A Carrier domain is found at 2297–2375; that stretch reads TMLDAILRLT…TLAEFIEEKL (79 aa). O-(pantetheine 4'-phosphoryl)serine is present on Ser2334.

It participates in secondary metabolite biosynthesis. Its function is as follows. Highly reducing polyketide synthase; part of the gene cluster that mediates the biosynthesis of virensols and trichoxide, fungal natural products that contain or are derived from a salicylaldehyde core. The pathway begins with the synthesis of the reduced chain in virensol C by the highly reducing polyketide synthase virA via condensation of one acetate and 8 malonate units. VirA has interesting programming rules since the first 2 ketides are fully reduced, the 3 following ketides undergo beta-dehydration, and the last 3 ketides are only reduced to beta-hydroxys to yield the trihydroxy portion. The production of aldehyde virensol C by virA alone is surprising, since virA does not contain a reductase (R) domain that is typically associated with reductive product release in HRPKS. The cupin-domain enzyme virC is involved in enhancing virA product turnover. The short-chain dehydrogenase virB then oxidizes the C-7 alcohol of virensol C to a ketone, yielding virensol D. Virensol D is further transformed to salicylaldehyde 5-deoxyaurocitrin by the short-chain dehydrogenase virD. VirD catalyzes the dehydrogenation of C-3 to form the beta-ketone aldehyde, which is followed by the generation of the nucleophilic C-2 that is required for the intramolecular aldol condensation between C-2 and C-7, itself followed by dehydration and aromatization which leads to salicylaldehyde 5-deoxyaurocitrin. While the dehydrogenation of virensol D is definitely catalyzed by virD, the aldol condensation and dehydration may be uncatalyzed or assisted by virD. The short chain dehydrogenase virG then converts salicylaldehyde 5-deoxyaurocitrin into virensol B which is further hydroxylated by the cytochrome P450 monooxygenase virE to yield the hydroquinone virensol A. VirI then may oxidize virensol A to form the quinone, while virH performs the epoxidation. Finally, the two remaining short-chain dehydrogenases, virK and virL, are probably responsible for reducing the ketones to the corresponding alcohols to furnish the epoxycyclohexanol structure in trichoxide. The polypeptide is Highly reducing polyketide synthase virA (Hypocrea virens (strain Gv29-8 / FGSC 10586) (Gliocladium virens)).